A 121-amino-acid polypeptide reads, in one-letter code: Protein TusC (121 aa).

Belongs to the DsrF/TusC family. As to quaternary structure, heterohexamer, formed by a dimer of trimers. The hexameric TusBCD complex contains 2 copies each of TusB, TusC and TusD. The TusBCD complex interacts with TusE.

It is found in the cytoplasm. Functionally, part of a sulfur-relay system required for 2-thiolation of 5-methylaminomethyl-2-thiouridine (mnm(5)s(2)U) at tRNA wobble positions. The sequence is that of Protein TusC from Yersinia pestis bv. Antiqua (strain Antiqua).